A 105-amino-acid chain; its full sequence is Large ribosomal subunit protein uL24 (105 aa).

This sequence belongs to the universal ribosomal protein uL24 family. Part of the 50S ribosomal subunit.

One of two assembly initiator proteins, it binds directly to the 5'-end of the 23S rRNA, where it nucleates assembly of the 50S subunit. Its function is as follows. One of the proteins that surrounds the polypeptide exit tunnel on the outside of the subunit. The polypeptide is Large ribosomal subunit protein uL24 (Methylobacillus flagellatus (strain ATCC 51484 / DSM 6875 / VKM B-1610 / KT)).